The chain runs to 266 residues: MVDTAVVDTALLEANQLSYHVQGQKLINNVSLQIASGEMVAIIGPNGAGKSTLLRLLTGYLAPSEGHCQLLGKNLNSWQPQALARTRAVMRQYSDLAFPFSVSEVIQMGRAPYGAAQNRQALQEVMAQTDCLALAQRDYRALSGGEQQRVQLARVLAQLWQPEPTSRWLFLDEPTSALDLYHQQHTLRLLRQLTLEEPLAVCCVLHDLNLAALYADRILLLAQGELVACGTPEEVLNAETLTRWYQADLGISRHPESALPQIYLRQ.

The ABC transporter domain occupies 12-248 (LEANQLSYHV…ETLTRWYQAD (237 aa)). ATP is bound at residue 44–51 (GPNGAGKS).

The protein belongs to the ABC transporter superfamily. Heme (hemin) importer (TC 3.A.1.14.5) family. The complex is composed of two ATP-binding proteins (HmuV), two transmembrane proteins (HmuU) and a solute-binding protein (HmuT).

It localises to the cell inner membrane. Part of the ABC transporter complex HmuTUV involved in hemin import. Responsible for energy coupling to the transport system. In Yersinia enterocolitica, this protein is Hemin import ATP-binding protein HmuV.